The primary structure comprises 147 residues: Acidic phospholipase A2 S3-24 (147 aa).

Residues Met-1 to Ala-19 form the signal peptide. Positions Ser-20–Leu-27 are excised as a propeptide. Disulfide bonds link Cys-38/Cys-99, Cys-54/Cys-146, Cys-56/Cys-72, Cys-71/Cys-127, Cys-78/Cys-120, Cys-88/Cys-113, and Cys-106/Cys-118. Ca(2+) contacts are provided by Tyr-55, Gly-57, and Gly-59. Residue His-75 is part of the active site. Asp-76 contacts Ca(2+). Residue Asp-121 is part of the active site.

This sequence belongs to the phospholipase A2 family. Group I subfamily. D49 sub-subfamily. Ca(2+) serves as cofactor. As to expression, expressed by the venom gland.

Its subcellular location is the secreted. It carries out the reaction a 1,2-diacyl-sn-glycero-3-phosphocholine + H2O = a 1-acyl-sn-glycero-3-phosphocholine + a fatty acid + H(+). Snake venom phospholipase A2 (PLA2) that inhibits collagen-induced platelet aggregation. PLA2 catalyzes the calcium-dependent hydrolysis of the 2-acyl groups in 3-sn-phosphoglycerides. The protein is Acidic phospholipase A2 S3-24 of Austrelaps superbus (Lowland copperhead snake).